A 1067-amino-acid polypeptide reads, in one-letter code: Eukaryotic translation initiation factor 3 subunit A (1067 aa).

Positions 92-121 (LKKFIELAEKKVTEAQAKADEIQSSLESAA) form a coiled coil. Residues 339–523 (MTKAASFVLL…GVLTFDTDIF (185 aa)) enclose the PCI domain. A coiled-coil region spans residues 608-899 (RVLIEKKKEA…QKQREEEAEA (292 aa)). 4 stretches are compositionally biased toward basic and acidic residues: residues 617 to 632 (AATDALQRKQREEETR), 642 to 665 (EAEKQRLLDEQREREKKRLKDEQD), 795 to 901 (EVSE…EARR), and 916 to 926 (AEPERPAERTA). Disordered stretches follow at residues 617–665 (AATD…DEQD) and 795–1067 (EVSE…QQQQ). Low complexity-rich tracts occupy residues 965–976 (AAPAAAPAPAAE) and 1025–1046 (SSSSQPPSRTQTPPAPAAAASS).

The protein belongs to the eIF-3 subunit A family. Component of the eukaryotic translation initiation factor 3 (eIF-3) complex.

The protein resides in the cytoplasm. Functionally, RNA-binding component of the eukaryotic translation initiation factor 3 (eIF-3) complex, which is involved in protein synthesis of a specialized repertoire of mRNAs and, together with other initiation factors, stimulates binding of mRNA and methionyl-tRNAi to the 40S ribosome. The eIF-3 complex specifically targets and initiates translation of a subset of mRNAs involved in cell proliferation. In Neosartorya fischeri (strain ATCC 1020 / DSM 3700 / CBS 544.65 / FGSC A1164 / JCM 1740 / NRRL 181 / WB 181) (Aspergillus fischerianus), this protein is Eukaryotic translation initiation factor 3 subunit A (tif32).